Here is a 516-residue protein sequence, read N- to C-terminus: Acetylcholine receptor subunit alpha-like (516 aa).

Residues 1-21 (MRSVTKYYLHGVVLFATGCAG) form the signal peptide. The Extracellular portion of the chain corresponds to 22–243 (NPDAKRLYDD…ITMRRKTLFY (222 aa)). Asn-45 and Asn-132 each carry an N-linked (GlcNAc...) asparagine glycan. Intrachain disulfides connect Cys-149–Cys-163 and Cys-222–Cys-223. N-linked (GlcNAc...) asparagine glycosylation is present at Asn-233. 3 helical membrane-spanning segments follow: residues 244 to 264 (TVNL…VFYL), 274 to 294 (LSIS…EIIP), and 306 to 326 (FVLF…VVLN). Topologically, residues 327 to 465 (VHFRSPQTHT…WKYVAMVLDR (139 aa)) are cytoplasmic. Residues 466–486 (PFLWIFTLAVVVGSAGIILQA) form a helical membrane-spanning segment.

It belongs to the ligand-gated ion channel (TC 1.A.9) family. Acetylcholine receptor (TC 1.A.9.1) subfamily.

It is found in the postsynaptic cell membrane. Its subcellular location is the cell membrane. After binding acetylcholine, the AChR responds by an extensive change in conformation that affects all subunits and leads to opening of an ion-conducting channel across the plasma membrane. This Manduca sexta (Tobacco hawkmoth) protein is Acetylcholine receptor subunit alpha-like (ARA1).